Reading from the N-terminus, the 320-residue chain is Acetyl-coenzyme A carboxylase carboxyl transferase subunit beta (320 aa).

The 270-residue stretch at 25-294 (VWTKCDSCGQ…AKDEDELLGE (270 aa)) folds into the CoA carboxyltransferase N-terminal domain. Zn(2+) is bound by residues C29, C32, C48, and C51. Residues 29 to 51 (CDSCGQVLYRAELERNLEVCPKC) form a C4-type zinc finger. The segment covering 295 to 310 (EMIADDIESSDNEPEI) has biased composition (acidic residues). The disordered stretch occupies residues 295–320 (EMIADDIESSDNEPEINIETNKKEDV).

This sequence belongs to the AccD/PCCB family. Acetyl-CoA carboxylase is a heterohexamer composed of biotin carboxyl carrier protein (AccB), biotin carboxylase (AccC) and two subunits each of ACCase subunit alpha (AccA) and ACCase subunit beta (AccD). It depends on Zn(2+) as a cofactor.

The protein resides in the cytoplasm. It catalyses the reaction N(6)-carboxybiotinyl-L-lysyl-[protein] + acetyl-CoA = N(6)-biotinyl-L-lysyl-[protein] + malonyl-CoA. It functions in the pathway lipid metabolism; malonyl-CoA biosynthesis; malonyl-CoA from acetyl-CoA: step 1/1. Functionally, component of the acetyl coenzyme A carboxylase (ACC) complex. Biotin carboxylase (BC) catalyzes the carboxylation of biotin on its carrier protein (BCCP) and then the CO(2) group is transferred by the transcarboxylase to acetyl-CoA to form malonyl-CoA. The chain is Acetyl-coenzyme A carboxylase carboxyl transferase subunit beta from Proteus mirabilis (strain HI4320).